The primary structure comprises 289 residues: Polyisoprenoid diphosphate/phosphate phosphohydrolase PLPP6 (289 aa).

Residues methionine 1–proline 81 form a disordered region. Residues methionine 1–proline 126 lie on the Cytoplasmic side of the membrane. 3 positions are modified to phosphoserine: serine 23, serine 30, and serine 64. A helical membrane pass occupies residues leucine 127–cysteine 147. Residues leucine 148–glutamate 158 lie on the Lumenal side of the membrane. The helical transmembrane segment at valine 159–glycine 179 threads the bilayer. The tract at residues lysine 178–proline 186 is phosphatase sequence motif I. Over leucine 180–histidine 222 the chain is Cytoplasmic. The phosphatase sequence motif II stretch occupies residues proline 205–histidine 208. Residue histidine 208 is the Proton donors of the active site. Residues leucine 223 to serine 243 form a helical membrane-spanning segment. The phosphatase sequence motif III stretch occupies residues serine 243–aspartate 254. Residues arginine 244–aspartate 254 are Lumenal-facing. The active-site Nucleophile is the histidine 250. Residues valine 255–serine 275 form a helical membrane-spanning segment. Residues proline 276–proline 289 are Cytoplasmic-facing.

This sequence belongs to the PA-phosphatase related phosphoesterase family. Post-translationally, phosphorylation by PKC activates the phosphatase activity towards presqualene diphosphate.

The protein resides in the endoplasmic reticulum membrane. The protein localises to the nucleus envelope. It localises to the nucleus inner membrane. It carries out the reaction presqualene diphosphate + H2O = presqualene phosphate + phosphate + H(+). The enzyme catalyses presqualene phosphate + H2O = presqualene alcohol + phosphate. It catalyses the reaction (2E,6E)-farnesyl diphosphate + H2O = (2E,6E)-farnesyl phosphate + phosphate + H(+). The catalysed reaction is (2E,6E)-farnesyl phosphate + H2O = (2E,6E)-farnesol + phosphate. It carries out the reaction (2E,6E,10E)-geranylgeranyl diphosphate + H2O = (2E,6E,10E)-geranylgeranyl phosphate + phosphate + H(+). The enzyme catalyses (2E,6E,10E)-geranylgeranyl phosphate + H2O = (2E,6E,10E)-geranylgeraniol + phosphate. It catalyses the reaction (2E)-geranyl diphosphate + H2O = (2E)-geranyl phosphate + phosphate + H(+). The catalysed reaction is (2E)-geranyl phosphate + H2O = (2E)-geraniol + phosphate. It carries out the reaction 1,2-dihexadecanoyl-sn-glycero-3-phosphate + H2O = 1,2-dihexadecanoyl-sn-glycerol + phosphate. Functionally, magnesium-independent polyisoprenoid diphosphatase that catalyzes the sequential dephosphorylation of presqualene, farnesyl, geranyl and geranylgeranyl diphosphates. Functions in the innate immune response through the dephosphorylation of presqualene diphosphate which acts as a potent inhibitor of the signaling pathways contributing to polymorphonuclear neutrophils activation. May regulate the biosynthesis of cholesterol and related sterols by dephosphorylating presqualene and farnesyl diphosphate, two key intermediates in this biosynthetic pathway. May also play a role in protein prenylation by acting on farnesyl diphosphate and its derivative geranylgeranyl diphosphate, two precursors for the addition of isoprenoid anchors to membrane proteins. Has a lower activity towards phosphatidic acid (PA), but through phosphatidic acid dephosphorylation may participate in the biosynthesis of phospholipids and triacylglycerols. May also act on ceramide-1-P, lysophosphatidic acid (LPA) and sphing-4-enine 1-phosphate/sphingosine-1-phosphate. In Bos taurus (Bovine), this protein is Polyisoprenoid diphosphate/phosphate phosphohydrolase PLPP6.